Consider the following 247-residue polypeptide: 2,3-bisphosphoglycerate-dependent phosphoglycerate mutase (247 aa).

Substrate-binding positions include 8 to 15 (RHGESVWN), 21 to 22 (TG), Arg-60, 87 to 90 (ERHY), Lys-98, 114 to 115 (RR), and 183 to 184 (GN). His-9 (tele-phosphohistidine intermediate) is an active-site residue. Catalysis depends on Glu-87, which acts as the Proton donor/acceptor.

It belongs to the phosphoglycerate mutase family. BPG-dependent PGAM subfamily.

It catalyses the reaction (2R)-2-phosphoglycerate = (2R)-3-phosphoglycerate. Its pathway is carbohydrate degradation; glycolysis; pyruvate from D-glyceraldehyde 3-phosphate: step 3/5. Functionally, catalyzes the interconversion of 2-phosphoglycerate and 3-phosphoglycerate. The chain is 2,3-bisphosphoglycerate-dependent phosphoglycerate mutase from Thermobifida fusca (strain YX).